The following is a 318-amino-acid chain: Aspartate carbamoyltransferase catalytic subunit (318 aa).

Residues Arg-55 and Thr-56 each coordinate carbamoyl phosphate. Lys-83 is an L-aspartate binding site. The carbamoyl phosphate site is built by Arg-105, His-138, and Gln-141. Residues Arg-171 and Arg-225 each coordinate L-aspartate. Gly-266 and Pro-267 together coordinate carbamoyl phosphate.

It belongs to the aspartate/ornithine carbamoyltransferase superfamily. ATCase family. As to quaternary structure, heterododecamer (2C3:3R2) of six catalytic PyrB chains organized as two trimers (C3), and six regulatory PyrI chains organized as three dimers (R2).

The enzyme catalyses carbamoyl phosphate + L-aspartate = N-carbamoyl-L-aspartate + phosphate + H(+). It functions in the pathway pyrimidine metabolism; UMP biosynthesis via de novo pathway; (S)-dihydroorotate from bicarbonate: step 2/3. Functionally, catalyzes the condensation of carbamoyl phosphate and aspartate to form carbamoyl aspartate and inorganic phosphate, the committed step in the de novo pyrimidine nucleotide biosynthesis pathway. The chain is Aspartate carbamoyltransferase catalytic subunit from Corynebacterium kroppenstedtii (strain DSM 44385 / JCM 11950 / CIP 105744 / CCUG 35717).